A 604-amino-acid polypeptide reads, in one-letter code: UvrABC system protein C (604 aa).

Residues 17 to 95 (SQPGVYRMLN…IKSLAPRYNI (79 aa)) form the GIY-YIG domain. A UVR domain is found at 204–239 (DEVLKTIEQKMFEASDRQAYEQAVLFRDQMQALRMI).

It belongs to the UvrC family. In terms of assembly, interacts with UvrB in an incision complex.

It localises to the cytoplasm. Functionally, the UvrABC repair system catalyzes the recognition and processing of DNA lesions. UvrC both incises the 5' and 3' sides of the lesion. The N-terminal half is responsible for the 3' incision and the C-terminal half is responsible for the 5' incision. The polypeptide is UvrABC system protein C (Nitrosomonas eutropha (strain DSM 101675 / C91 / Nm57)).